Reading from the N-terminus, the 561-residue chain is MNINISDLLNGNYILLLFVVLALGLCLGKLRLGSVQLGNSIGVLVVSLLLGQQHFSINTDALNLGFMLFIFCVGVEAGPNFFSIFFRDGKNYLMLALVMVGSALLIALGLGKLFGWDIGLTAGMLAGSMTSTPVLVGAGDTLRHSGIASPQLSSALDNLSLGYALTYLIGLVSLIVGARYLPKLQHQDLQTSAQQIARERGLDTDANRKVYLPVIRAYRVGPELVAWTDGKNLRELGIYRQTGCYIERIRRNGILANPDGDAVLQMGDEIALVGYPDAHARLDPSFRNGKEVFDRDLLDMRIVTEEIVVKNHNAVGRRLAQLKLTDHGCFLNRVIRSQIEMPIDDNVVLNKGDVLQVSGDARRVKTIADRIGFISIHSQVTDLLAFCAFFIIGLMIGMITFQFSNFSFGIGNAAGLLFAGIMLGFLRANHPTFGYIPQGALNMVKEFGLMVFMAGVGLSAGSGINNGLGAVGGQMLIAGLVVSLVPVVICFLFGAYVLRMNRALLFGAMMGARTCAPAMEIISDTARSNIPALGYAGTYAIANVLLTLAGTLIVIIWPELG.

A run of 5 helical transmembrane segments spans residues 8 to 28 (LLNG…LCLG), 32 to 52 (LGSV…LLGQ), 66 to 86 (FMLF…SIFF), 94 to 114 (MLAL…GKLF), and 158 to 178 (NLSL…IVGA). RCK C-terminal domains lie at 200 to 288 (RGLD…SFRN) and 292 to 373 (VFDR…RIGF). Helical transmembrane passes span 383–403 (LLAF…TFQF), 406–426 (FSFG…LGFL), 447–467 (FGLM…INNG), 475–495 (MLIA…LFGA), and 537–557 (GTYA…VIIW).

Belongs to the AAE transporter (TC 2.A.81) family. YbjL subfamily.

It is found in the cell membrane. This Salmonella choleraesuis (strain SC-B67) protein is Putative transport protein YbjL.